The primary structure comprises 486 residues: NADH dehydrogenase [ubiquinone] flavoprotein 1, mitochondrial (486 aa).

The N-terminal 30 residues, 1-30, are a transit peptide targeting the mitochondrion; that stretch reads MAPVRGILGLQRAVSIWKESNRLTPALRSF. The span at 31–40 shows a compositional bias: low complexity; sequence STQAASTSTT. The interval 31 to 57 is disordered; it reads STQAASTSTTPQPPPPPPPPEKTHFGG. The span at 41–50 shows a compositional bias: pro residues; sequence PQPPPPPPPP. 110–119 provides a ligand contact to NADH; the sequence is GRGGAGFPSG. 222–270 is an FMN binding site; sequence FGAGAYICGEETALLESLEGKQGKPRLKPPFPANAGLYGCPTTVTNVET. The [4Fe-4S] cluster site is built by Cys402, Cys405, Cys408, and Cys448.

Belongs to the complex I 51 kDa subunit family. In terms of assembly, complex I is composed of at least 49 different subunits. This is a component of the flavoprotein-sulfur (FP) fragment of the enzyme. FMN is required as a cofactor. The cofactor is [4Fe-4S] cluster.

The protein resides in the mitochondrion inner membrane. It catalyses the reaction a ubiquinone + NADH + 5 H(+)(in) = a ubiquinol + NAD(+) + 4 H(+)(out). Core subunit of the mitochondrial membrane respiratory chain NADH dehydrogenase (Complex I) that is believed to belong to the minimal assembly required for catalysis. Complex I functions in the transfer of electrons from NADH to the respiratory chain. The immediate electron acceptor for the enzyme is believed to be ubiquinone. This is NADH dehydrogenase [ubiquinone] flavoprotein 1, mitochondrial from Arabidopsis thaliana (Mouse-ear cress).